The following is a 635-amino-acid chain: Probable clathrin assembly protein At4g32285 (635 aa).

In terms of domain architecture, ENTH spans 23-159 (VASNMAPDLE…ELALFERRGR (137 aa)). A disordered region spans residues 157 to 208 (RGRNGGGSSSSHQSNGDDGYNRSRDDFRSPPPRTYDYETGNGFGMPKRSRSF). Positions 165-174 (SSSHQSNGDD) are enriched in low complexity. Residues 175-184 (GYNRSRDDFR) show a composition bias toward basic and acidic residues. Ser-207 is subject to Phosphoserine. At Thr-224 the chain carries Phosphothreonine. A compositionally biased stretch (basic and acidic residues) spans 357 to 369 (AKRAKSPERKEIE). A disordered region spans residues 357–412 (AKRAKSPERKEIEAPPAPAPPVEEPVDMNEIKALPPPENHTPPPPPAPEPKPQQPQ). A compositionally biased stretch (pro residues) spans 390–409 (LPPPENHTPPPPPAPEPKPQ).

The protein localises to the membrane. It localises to the clathrin-coated pit. The protein resides in the golgi apparatus. It is found in the cytoplasmic vesicle. Its subcellular location is the clathrin-coated vesicle. This is Probable clathrin assembly protein At4g32285 from Arabidopsis thaliana (Mouse-ear cress).